The sequence spans 156 residues: ATP synthase subunit b 1 (156 aa).

A helical membrane pass occupies residues Leu7–Pro27.

It belongs to the ATPase B chain family. As to quaternary structure, F-type ATPases have 2 components, F(1) - the catalytic core - and F(0) - the membrane proton channel. F(1) has five subunits: alpha(3), beta(3), gamma(1), delta(1), epsilon(1). F(0) has three main subunits: a(1), b(2) and c(10-14). The alpha and beta chains form an alternating ring which encloses part of the gamma chain. F(1) is attached to F(0) by a central stalk formed by the gamma and epsilon chains, while a peripheral stalk is formed by the delta and b chains.

The protein localises to the cell inner membrane. F(1)F(0) ATP synthase produces ATP from ADP in the presence of a proton or sodium gradient. F-type ATPases consist of two structural domains, F(1) containing the extramembraneous catalytic core and F(0) containing the membrane proton channel, linked together by a central stalk and a peripheral stalk. During catalysis, ATP synthesis in the catalytic domain of F(1) is coupled via a rotary mechanism of the central stalk subunits to proton translocation. Its function is as follows. Component of the F(0) channel, it forms part of the peripheral stalk, linking F(1) to F(0). This Albidiferax ferrireducens (strain ATCC BAA-621 / DSM 15236 / T118) (Rhodoferax ferrireducens) protein is ATP synthase subunit b 1.